The chain runs to 334 residues: Trans-1,2-dihydrobenzene-1,2-diol dehydrogenase (334 aa).

The protein belongs to the Gfo/Idh/MocA family. In terms of assembly, homodimer. Kidney.

The enzyme catalyses (1R,2R)-1,2-dihydrobenzene-1,2-diol + NADP(+) = catechol + NADPH + H(+). It carries out the reaction D-xylose + NADP(+) = D-xylono-1,5-lactone + NADPH + H(+). The protein is Trans-1,2-dihydrobenzene-1,2-diol dehydrogenase (DHDH) of Macaca fascicularis (Crab-eating macaque).